Reading from the N-terminus, the 293-residue chain is Probable porphobilinogen deaminase (293 aa).

An S-(dipyrrolylmethanemethyl)cysteine modification is found at C233.

It belongs to the HMBS family. The cofactor is dipyrromethane.

The enzyme catalyses 4 porphobilinogen + H2O = hydroxymethylbilane + 4 NH4(+). The protein operates within porphyrin-containing compound metabolism; protoporphyrin-IX biosynthesis; coproporphyrinogen-III from 5-aminolevulinate: step 2/4. In terms of biological role, tetrapolymerization of the monopyrrole PBG into the hydroxymethylbilane pre-uroporphyrinogen in several discrete steps. The sequence is that of Probable porphobilinogen deaminase from Saccharolobus islandicus (strain M.16.27) (Sulfolobus islandicus).